A 135-amino-acid chain; its full sequence is uncharacterized protein (135 aa).

In terms of domain architecture, VOC spans 4–129 (SIVHIALVVN…YGNLWDLLQL (126 aa)).

To B.subtilis YwkD.

This is an uncharacterized protein from Shewanella frigidimarina (strain NCIMB 400).